Reading from the N-terminus, the 347-residue chain is Selenide, water dikinase (347 aa).

Residue Cys17 is part of the active site. ATP contacts are provided by residues Lys20 and 48-50; that span reads TRD. Asp51 contacts Mg(2+). ATP contacts are provided by residues Asp68, Asp91, and 139–141; that span reads GHS. Residue Asp91 coordinates Mg(2+). Asp227 is a binding site for Mg(2+).

The protein belongs to the selenophosphate synthase 1 family. Class I subfamily. As to quaternary structure, homodimer. Mg(2+) is required as a cofactor.

The enzyme catalyses hydrogenselenide + ATP + H2O = selenophosphate + AMP + phosphate + 2 H(+). Functionally, synthesizes selenophosphate from selenide and ATP. This is Selenide, water dikinase from Escherichia coli O157:H7.